The primary structure comprises 45 residues: DNA-directed RNA polymerase subunit Rpo12 (45 aa).

Zn(2+) contacts are provided by C8, C23, and C26.

This sequence belongs to the archaeal Rpo12/eukaryotic RPC10 RNA polymerase subunit family. As to quaternary structure, part of the RNA polymerase complex. Zn(2+) is required as a cofactor.

It localises to the cytoplasm. The catalysed reaction is RNA(n) + a ribonucleoside 5'-triphosphate = RNA(n+1) + diphosphate. Its function is as follows. DNA-dependent RNA polymerase (RNAP) catalyzes the transcription of DNA into RNA using the four ribonucleoside triphosphates as substrates. This is DNA-directed RNA polymerase subunit Rpo12 from Methanosarcina acetivorans (strain ATCC 35395 / DSM 2834 / JCM 12185 / C2A).